A 704-amino-acid polypeptide reads, in one-letter code: Glycine--tRNA ligase beta subunit (704 aa).

Belongs to the class-II aminoacyl-tRNA synthetase family. In terms of assembly, tetramer of two alpha and two beta subunits.

The protein resides in the cytoplasm. It carries out the reaction tRNA(Gly) + glycine + ATP = glycyl-tRNA(Gly) + AMP + diphosphate. The protein is Glycine--tRNA ligase beta subunit of Rhizobium etli (strain ATCC 51251 / DSM 11541 / JCM 21823 / NBRC 15573 / CFN 42).